A 486-amino-acid polypeptide reads, in one-letter code: Protein nucleotidyltransferase YdiU (486 aa).

ATP contacts are provided by Gly90, Gly92, Arg93, Lys113, Asp125, Gly126, Arg176, and Arg183. Asp252 acts as the Proton acceptor in catalysis. Residues Asn253 and Asp262 each coordinate Mg(2+). Asp262 contributes to the ATP binding site.

This sequence belongs to the SELO family. Mg(2+) is required as a cofactor. Requires Mn(2+) as cofactor.

It catalyses the reaction L-seryl-[protein] + ATP = 3-O-(5'-adenylyl)-L-seryl-[protein] + diphosphate. The enzyme catalyses L-threonyl-[protein] + ATP = 3-O-(5'-adenylyl)-L-threonyl-[protein] + diphosphate. It carries out the reaction L-tyrosyl-[protein] + ATP = O-(5'-adenylyl)-L-tyrosyl-[protein] + diphosphate. The catalysed reaction is L-histidyl-[protein] + UTP = N(tele)-(5'-uridylyl)-L-histidyl-[protein] + diphosphate. It catalyses the reaction L-seryl-[protein] + UTP = O-(5'-uridylyl)-L-seryl-[protein] + diphosphate. The enzyme catalyses L-tyrosyl-[protein] + UTP = O-(5'-uridylyl)-L-tyrosyl-[protein] + diphosphate. In terms of biological role, nucleotidyltransferase involved in the post-translational modification of proteins. It can catalyze the addition of adenosine monophosphate (AMP) or uridine monophosphate (UMP) to a protein, resulting in modifications known as AMPylation and UMPylation. This Pseudomonas aeruginosa (strain UCBPP-PA14) protein is Protein nucleotidyltransferase YdiU.